Reading from the N-terminus, the 501-residue chain is AKT kinase-transforming protein (501 aa).

The region spanning 26 to 129 is the PH domain; the sequence is AIVKEGWLHK…WATAIQTVAD (104 aa). The interval 135-158 is disordered; that stretch reads EEETMDFRSGSPSDNSGAEEMEVS. The Protein kinase domain occupies 171–429; it reads FEYLKLLGKG…AKEIMQHRFF (259 aa). Residues 177 to 185 and Lys200 each bind ATP; that span reads LGKGTFGKV. Asp295 functions as the Proton acceptor in the catalytic mechanism. Tyr347 carries the post-translational modification Phosphotyrosine. Residues 430 to 501 enclose the AGC-kinase C-terminal domain; the sequence is ANIVWQDVYE…QFSYSASGTA (72 aa). Positions 471 to 501 are disordered; that stretch reads TPPDQDDSMECVDSERRPHFPQFSYSASGTA.

Belongs to the protein kinase superfamily. AGC Ser/Thr protein kinase family. RAC subfamily. As to quaternary structure, interacts with mouse THEM4. In terms of processing, autophosphorylated on threonine and serine residues.

The catalysed reaction is L-seryl-[protein] + ATP = O-phospho-L-seryl-[protein] + ADP + H(+). It catalyses the reaction L-threonyl-[protein] + ATP = O-phospho-L-threonyl-[protein] + ADP + H(+). This chain is AKT kinase-transforming protein (V-AKT), found in Mus musculus (Mouse).